The chain runs to 258 residues: Exu regulon transcriptional regulator (258 aa).

Residues 7–75 (RRLYQQLAAD…KGSGIHVVSN (69 aa)) enclose the HTH gntR-type domain. Residues 35–54 (ERFIADEKNVSRTVVREAII) constitute a DNA-binding region (H-T-H motif).

Its function is as follows. Repressor for the exu regulon that encode genes involved in hexuronate utilization. It regulates the ExuT, UxaCA and UxuRAB operons. Binds D-tagaturonate and D-fructuronate as inducers. In Escherichia coli O157:H7, this protein is Exu regulon transcriptional regulator (exuR).